A 77-amino-acid chain; its full sequence is Large ribosomal subunit protein uL29 (77 aa).

It belongs to the universal ribosomal protein uL29 family.

This Mycolicibacterium gilvum (strain PYR-GCK) (Mycobacterium gilvum (strain PYR-GCK)) protein is Large ribosomal subunit protein uL29.